A 233-amino-acid polypeptide reads, in one-letter code: Phosphoribosylformylglycinamidine synthase subunit PurQ (233 aa).

A Glutamine amidotransferase type-1 domain is found at 3–233 (SAILVFPGIN…GLVAHLERAA (231 aa)). The active-site Nucleophile is the C87. Active-site residues include H204 and E206.

In terms of assembly, part of the FGAM synthase complex composed of 1 PurL, 1 PurQ and 2 PurS subunits.

It is found in the cytoplasm. It catalyses the reaction N(2)-formyl-N(1)-(5-phospho-beta-D-ribosyl)glycinamide + L-glutamine + ATP + H2O = 2-formamido-N(1)-(5-O-phospho-beta-D-ribosyl)acetamidine + L-glutamate + ADP + phosphate + H(+). The catalysed reaction is L-glutamine + H2O = L-glutamate + NH4(+). The protein operates within purine metabolism; IMP biosynthesis via de novo pathway; 5-amino-1-(5-phospho-D-ribosyl)imidazole from N(2)-formyl-N(1)-(5-phospho-D-ribosyl)glycinamide: step 1/2. Its function is as follows. Part of the phosphoribosylformylglycinamidine synthase complex involved in the purines biosynthetic pathway. Catalyzes the ATP-dependent conversion of formylglycinamide ribonucleotide (FGAR) and glutamine to yield formylglycinamidine ribonucleotide (FGAM) and glutamate. The FGAM synthase complex is composed of three subunits. PurQ produces an ammonia molecule by converting glutamine to glutamate. PurL transfers the ammonia molecule to FGAR to form FGAM in an ATP-dependent manner. PurS interacts with PurQ and PurL and is thought to assist in the transfer of the ammonia molecule from PurQ to PurL. The polypeptide is Phosphoribosylformylglycinamidine synthase subunit PurQ (Nitrobacter hamburgensis (strain DSM 10229 / NCIMB 13809 / X14)).